The chain runs to 174 residues: UPF0316 protein lwe1794 (174 aa).

The next 3 membrane-spanning stretches (helical) occupy residues 4–24 (GLFI…IYTV), 36–56 (LAAL…SLVL), and 62–82 (IANV…GMKI).

This sequence belongs to the UPF0316 family.

The protein localises to the cell membrane. The sequence is that of UPF0316 protein lwe1794 from Listeria welshimeri serovar 6b (strain ATCC 35897 / DSM 20650 / CCUG 15529 / CIP 8149 / NCTC 11857 / SLCC 5334 / V8).